A 210-amino-acid chain; its full sequence is Thiamine-phosphate synthase (210 aa).

4-amino-2-methyl-5-(diphosphooxymethyl)pyrimidine contacts are provided by residues 39–43 and asparagine 71; that span reads QLREK. Residues aspartate 72 and aspartate 91 each coordinate Mg(2+). Serine 110 contacts 4-amino-2-methyl-5-(diphosphooxymethyl)pyrimidine. A 2-[(2R,5Z)-2-carboxy-4-methylthiazol-5(2H)-ylidene]ethyl phosphate-binding site is contributed by 134–136; it reads TPT. Lysine 137 is a binding site for 4-amino-2-methyl-5-(diphosphooxymethyl)pyrimidine. Glycine 163 contacts 2-[(2R,5Z)-2-carboxy-4-methylthiazol-5(2H)-ylidene]ethyl phosphate.

The protein belongs to the thiamine-phosphate synthase family. Mg(2+) is required as a cofactor.

The catalysed reaction is 2-[(2R,5Z)-2-carboxy-4-methylthiazol-5(2H)-ylidene]ethyl phosphate + 4-amino-2-methyl-5-(diphosphooxymethyl)pyrimidine + 2 H(+) = thiamine phosphate + CO2 + diphosphate. The enzyme catalyses 2-(2-carboxy-4-methylthiazol-5-yl)ethyl phosphate + 4-amino-2-methyl-5-(diphosphooxymethyl)pyrimidine + 2 H(+) = thiamine phosphate + CO2 + diphosphate. It catalyses the reaction 4-methyl-5-(2-phosphooxyethyl)-thiazole + 4-amino-2-methyl-5-(diphosphooxymethyl)pyrimidine + H(+) = thiamine phosphate + diphosphate. It functions in the pathway cofactor biosynthesis; thiamine diphosphate biosynthesis; thiamine phosphate from 4-amino-2-methyl-5-diphosphomethylpyrimidine and 4-methyl-5-(2-phosphoethyl)-thiazole: step 1/1. Functionally, condenses 4-methyl-5-(beta-hydroxyethyl)thiazole monophosphate (THZ-P) and 2-methyl-4-amino-5-hydroxymethyl pyrimidine pyrophosphate (HMP-PP) to form thiamine monophosphate (TMP). In Campylobacter jejuni subsp. jejuni serotype O:2 (strain ATCC 700819 / NCTC 11168), this protein is Thiamine-phosphate synthase.